The chain runs to 205 residues: High frequency lysogenization protein HflD homolog (205 aa).

The protein belongs to the HflD family.

Its subcellular location is the cytoplasm. It localises to the cell inner membrane. This Aliivibrio fischeri (strain ATCC 700601 / ES114) (Vibrio fischeri) protein is High frequency lysogenization protein HflD homolog.